We begin with the raw amino-acid sequence, 623 residues long: Interleukin-27 receptor subunit alpha (623 aa).

The N-terminal stretch at methionine 1–glycine 24 is a signal peptide. The Extracellular segment spans residues threonine 25–lysine 510. Fibronectin type-III domains lie at serine 30–aspartate 124 and threonine 125–leucine 225. Asparagine 46 is a glycosylation site (N-linked (GlcNAc...) asparagine). The WSXWS motif signature appears at tryptophan 211–serine 215. N-linked (GlcNAc...) asparagine glycosylation is found at asparagine 296, asparagine 305, asparagine 360, asparagine 368, and asparagine 461. Fibronectin type-III domains are found at residues alanine 316–alanine 412 and glycine 413–asparagine 505. The helical transmembrane segment at alanine 511–alanine 531 threads the bilayer. The Cytoplasmic segment spans residues serine 532–valine 623. A Box 1 motif motif is present at residues isoleucine 552–alanine 560.

It belongs to the type I cytokine receptor family. Type 2 subfamily. In terms of tissue distribution, expressed in CD4+ and CD8+ T-cells, B-cells, natural killer cells and macrophages. Highest levels in CD4+ T-cells and natural killer cells. Expression highest in Th0 cells.

It localises to the membrane. In terms of biological role, receptor for IL27. Requires IL6ST/GP130 to mediate signal transduction in response to IL27. This signaling system acts through STAT3 and STAT1. Involved in the regulation of Th1-type immune responses. Also appears to be involved in innate defense mechanisms. This chain is Interleukin-27 receptor subunit alpha (Il27ra), found in Mus musculus (Mouse).